A 168-amino-acid chain; its full sequence is Nascent polypeptide-associated complex subunit alpha (168 aa).

Residues S14–L78 form the NAC-A/B domain. The disordered stretch occupies residues Q83–L129. The span at A100–A115 shows a compositional bias: low complexity. The UBA domain maps to L129–K168.

This sequence belongs to the NAC-alpha family. In terms of assembly, part of the nascent polypeptide-associated complex (NAC), consisting of EGD2 and EGD1. NAC associates with ribosomes via EGD1.

It localises to the cytoplasm. It is found in the nucleus. Component of the nascent polypeptide-associated complex (NAC), a dynamic component of the ribosomal exit tunnel, protecting the emerging polypeptides from interaction with other cytoplasmic proteins to ensure appropriate nascent protein targeting. The NAC complex also promotes mitochondrial protein import by enhancing productive ribosome interactions with the outer mitochondrial membrane and blocks the inappropriate interaction of ribosomes translating non-secretory nascent polypeptides with translocation sites in the membrane of the endoplasmic reticulum. EGD2 may also be involved in transcription regulation. This Eremothecium gossypii (strain ATCC 10895 / CBS 109.51 / FGSC 9923 / NRRL Y-1056) (Yeast) protein is Nascent polypeptide-associated complex subunit alpha (EGD2).